Consider the following 323-residue polypeptide: Lipoyl synthase (323 aa).

7 residues coordinate [4Fe-4S] cluster: Cys-61, Cys-66, Cys-72, Cys-87, Cys-91, Cys-94, and Ser-300. Residues 73–289 form the Radical SAM core domain; it reads WDKKHATFMI…ETVAYSKGFL (217 aa).

This sequence belongs to the radical SAM superfamily. Lipoyl synthase family. [4Fe-4S] cluster serves as cofactor.

The protein localises to the cytoplasm. The enzyme catalyses [[Fe-S] cluster scaffold protein carrying a second [4Fe-4S](2+) cluster] + N(6)-octanoyl-L-lysyl-[protein] + 2 oxidized [2Fe-2S]-[ferredoxin] + 2 S-adenosyl-L-methionine + 4 H(+) = [[Fe-S] cluster scaffold protein] + N(6)-[(R)-dihydrolipoyl]-L-lysyl-[protein] + 4 Fe(3+) + 2 hydrogen sulfide + 2 5'-deoxyadenosine + 2 L-methionine + 2 reduced [2Fe-2S]-[ferredoxin]. It functions in the pathway protein modification; protein lipoylation via endogenous pathway; protein N(6)-(lipoyl)lysine from octanoyl-[acyl-carrier-protein]: step 2/2. Its function is as follows. Catalyzes the radical-mediated insertion of two sulfur atoms into the C-6 and C-8 positions of the octanoyl moiety bound to the lipoyl domains of lipoate-dependent enzymes, thereby converting the octanoylated domains into lipoylated derivatives. The chain is Lipoyl synthase from Rhizobium leguminosarum bv. trifolii (strain WSM2304).